We begin with the raw amino-acid sequence, 318 residues long: Ubiquitin-like domain-containing CTD phosphatase 1 (318 aa).

Residues 3 to 81 (VSVIIKWGGQ…IMMMGTREES (79 aa)) enclose the Ubiquitin-like domain. An FCP1 homology domain is found at 133–294 (PRPGKRLLVL…YKLSQYLKEI (162 aa)). Mg(2+) is bound by residues Asp143, Asp145, and Asp253.

It depends on Mg(2+) as a cofactor.

The protein localises to the nucleus. The enzyme catalyses O-phospho-L-seryl-[protein] + H2O = L-seryl-[protein] + phosphate. It catalyses the reaction O-phospho-L-threonyl-[protein] + H2O = L-threonyl-[protein] + phosphate. Its function is as follows. Dephosphorylates 26S nuclear proteasomes, thereby decreasing their proteolytic activity. Recruited to the 19S regulatory particle of the 26S proteasome where it dephosphorylates 19S component psmc2 which impairs psmc2 ATPase activity and disrupts 26S proteasome assembly. Has also been reported to stimulate the proteolytic activity of the 26S proteasome. The sequence is that of Ubiquitin-like domain-containing CTD phosphatase 1 (ublcp1) from Danio rerio (Zebrafish).